The chain runs to 1315 residues: Serine-aspartate repeat-containing protein D (1315 aa).

The first 35 residues, 1–35 (MLNRENKTAITRKGMVSNRLNKFSIRKYTVGTASI), serve as a signal peptide directing secretion. The YSIRK-G/S signaling motif motif lies at 23–34 (FSIRKYTVGTAS). The tract at residues 36 to 568 (LVGTTLIFGL…NNQSGGAGQE (533 aa)) is ligand binding A region. Residues 54–185 (ESTNKELNEA…NKKVDAKTES (132 aa)) form a disordered region. Polar residues-rich tracts occupy residues 62 to 71 (EATTSASDNQ) and 94 to 108 (EMVSSQGNETTSNGN). Residues 130-145 (KSDEQASPKSTNEDLN) are compositionally biased toward basic and acidic residues. 2 stretches are compositionally biased toward polar residues: residues 146-155 (TKQTISNQEA) and 163-173 (NKSVVNVQPTN). Residues 174 to 183 (EENKKVDAKT) are compositionally biased toward basic and acidic residues. CNA-B domains lie at 569–680 (VYKI…IYKP), 681–791 (KYNL…YKTP), 792–901 (KYNL…FYKP), 902–1012 (TYNL…YKTP), and 1013–1123 (KYSL…EEET). Disordered stretches follow at residues 857-883 (ETPSGYTPTQVGSGTDEGIDSNGTSTT), 972-992 (YTPTSVTSGNDTEKDSNGLTT), and 1078-1291 (EKPA…SNNA). Composition is skewed to polar residues over residues 860–869 (SGYTPTQVGS) and 972–981 (YTPTSVTSGN). 4 stretches are compositionally biased toward acidic residues: residues 1091–1101 (TEDDKDADGGE), 1118–1134 (YYEEETSDSDSDSDSDS), 1142–1164 (SDSDSDSDSDSDSDSDSDSDSDS), and 1172–1254 (SDSD…DSDS). An LPXTG sorting signal motif is present at residues 1278–1282 (LPETG). Position 1281 is a pentaglycyl murein peptidoglycan amidated threonine (threonine 1281). A propeptide spans 1282–1315 (GNENSGSNNATLFGGLFAALGSLLLFGRRKKQNK) (removed by sortase).

The protein belongs to the serine-aspartate repeat-containing protein (SDr) family. Interacts with host DSG1; this interaction increases S.aureus adherence to keratinocytes. In terms of processing, anchored to the cell wall by sortase A.

It is found in the secreted. It localises to the cell wall. Its function is as follows. Cell surface-associated calcium-binding protein which plays an important role in adhesion and pathogenesis. Mediates interactions with components of the extracellular matrix such as host DSG1 to promote bacterial adhesion to host cells. Contributes to the resistance to killing by innate immune components such as neutrophils present in blood and thus attenuates bacterial clearance. The chain is Serine-aspartate repeat-containing protein D (sdrD) from Staphylococcus aureus (strain Newman).